A 521-amino-acid polypeptide reads, in one-letter code: GMP synthase [glutamine-hydrolyzing] (521 aa).

Residues 5–197 (KILILDFGSQ…VLDICGAQPG (193 aa)) enclose the Glutamine amidotransferase type-1 domain. Cys81 acts as the Nucleophile in catalysis. Residues His171 and Glu173 contribute to the active site. The 193-residue stretch at 198–390 (WTMPNYIEEA…LGLPREMVYR (193 aa)) folds into the GMPS ATP-PPase domain. 225 to 231 (SGGVDSS) serves as a coordination point for ATP.

In terms of assembly, homodimer.

It catalyses the reaction XMP + L-glutamine + ATP + H2O = GMP + L-glutamate + AMP + diphosphate + 2 H(+). It participates in purine metabolism; GMP biosynthesis; GMP from XMP (L-Gln route): step 1/1. In terms of biological role, catalyzes the synthesis of GMP from XMP. This is GMP synthase [glutamine-hydrolyzing] from Neisseria gonorrhoeae (strain ATCC 700825 / FA 1090).